The sequence spans 396 residues: tRNA(Met) cytidine acetate ligase (396 aa).

ATP is bound by residues 9 to 22, Gly-103, Asn-154, and Arg-179; that span reads IVEY…HLHH.

Belongs to the TmcAL family.

It localises to the cytoplasm. The catalysed reaction is cytidine(34) in elongator tRNA(Met) + acetate + ATP = N(4)-acetylcytidine(34) in elongator tRNA(Met) + AMP + diphosphate. In terms of biological role, catalyzes the formation of N(4)-acetylcytidine (ac(4)C) at the wobble position of elongator tRNA(Met), using acetate and ATP as substrates. First activates an acetate ion to form acetyladenylate (Ac-AMP) and then transfers the acetyl group to tRNA to form ac(4)C34. The chain is tRNA(Met) cytidine acetate ligase from Fusobacterium nucleatum subsp. nucleatum (strain ATCC 25586 / DSM 15643 / BCRC 10681 / CIP 101130 / JCM 8532 / KCTC 2640 / LMG 13131 / VPI 4355).